Consider the following 376-residue polypeptide: Pyrimidine monooxygenase RutA (376 aa).

FMN is bound by residues 61 to 62 (IK), Asn-127, Glu-136, 152 to 153 (RY), and Ser-202.

The protein belongs to the NtaA/SnaA/DszA monooxygenase family. RutA subfamily.

The catalysed reaction is uracil + FMNH2 + NADH + O2 = (Z)-3-ureidoacrylate + FMN + NAD(+) + H2O + H(+). It catalyses the reaction thymine + FMNH2 + NADH + O2 = (Z)-2-methylureidoacrylate + FMN + NAD(+) + H2O + H(+). Its function is as follows. Catalyzes the pyrimidine ring opening between N-3 and C-4 by an unusual flavin hydroperoxide-catalyzed mechanism, adding oxygen atoms in the process to yield ureidoacrylate peracid, that immediately reacts with FMN forming ureidoacrylate and FMN-N(5)-oxide. The FMN-N(5)-oxide reacts spontaneously with NADH to produce FMN. Requires the flavin reductase RutF to regenerate FMN in vivo. This is Pyrimidine monooxygenase RutA from Methylorubrum extorquens (strain CM4 / NCIMB 13688) (Methylobacterium extorquens).